A 110-amino-acid polypeptide reads, in one-letter code: Ribonuclease P protein component 1 (110 aa).

It belongs to the eukaryotic/archaeal RNase P protein component 1 family. As to quaternary structure, consists of a catalytic RNA component and at least 4-5 protein subunits.

It localises to the cytoplasm. It catalyses the reaction Endonucleolytic cleavage of RNA, removing 5'-extranucleotides from tRNA precursor.. Part of ribonuclease P, a protein complex that generates mature tRNA molecules by cleaving their 5'-ends. This chain is Ribonuclease P protein component 1, found in Methanosarcina mazei (strain ATCC BAA-159 / DSM 3647 / Goe1 / Go1 / JCM 11833 / OCM 88) (Methanosarcina frisia).